Here is a 241-residue protein sequence, read N- to C-terminus: Major prion protein (241 aa).

The first 15 residues, M1 to C15, serve as a signal peptide directing secretion. Residues K16–Y31 form an interaction with ADGRG6 region. Positions K16–S223 are interaction with GRB2, ERI3 and SYN1. The segment at R18–T100 is disordered. 5 tandem repeats follow at residues P44–Q52, P53–Q60, P61–Q68, P69–Q76, and P77–Q84. Positions P44 to Q84 are 5 X 8 AA tandem repeats of P-H-G-G-G-W-G-Q. Gly residues predominate over residues Q45 to T88. Cu(2+) contacts are provided by H54, G55, G56, H62, G63, G64, H70, G71, G72, H78, G79, and G80. A disulfide bridge connects residues C172 and C207. Residues N174 and N190 are each glycosylated (N-linked (GlcNAc...) asparagine). S223 is lipidated: GPI-anchor amidated serine. The propeptide at S224–I241 is removed in mature form.

The protein belongs to the prion family. As to quaternary structure, monomer and homodimer. Has a tendency to aggregate into amyloid fibrils containing a cross-beta spine, formed by a steric zipper of superposed beta-strands. Soluble oligomers may represent an intermediate stage on the path to fibril formation. Copper binding may promote oligomerization. Interacts with GRB2, APP, ERI3/PRNPIP and SYN1. Mislocalized cytosolically exposed PrP interacts with MGRN1; this interaction alters MGRN1 subcellular location and causes lysosomal enlargement. Interacts with APP. Interacts with KIAA1191. Interacts with ADGRG6.

Its subcellular location is the cell membrane. It is found in the golgi apparatus. Functionally, its primary physiological function is unclear. May play a role in neuronal development and synaptic plasticity. May be required for neuronal myelin sheath maintenance. May promote myelin homeostasis through acting as an agonist for ADGRG6 receptor. May play a role in iron uptake and iron homeostasis. Soluble oligomers are toxic to cultured neuroblastoma cells and induce apoptosis (in vitro). Association with GPC1 (via its heparan sulfate chains) targets PRNP to lipid rafts. Also provides Cu(2+) or Zn(2+) for the ascorbate-mediated GPC1 deaminase degradation of its heparan sulfate side chains. The protein is Major prion protein (PRNP) of Plecturocebus moloch (Dusky titi monkey).